The sequence spans 104 residues: L-rhamnose mutarotase (104 aa).

Tyr-18 contributes to the substrate binding site. The active-site Proton donor is the His-22. Residues Tyr-41 and 76-77 (WW) contribute to the substrate site.

Belongs to the rhamnose mutarotase family. As to quaternary structure, homodimer.

The protein localises to the cytoplasm. The enzyme catalyses alpha-L-rhamnose = beta-L-rhamnose. Its pathway is carbohydrate metabolism; L-rhamnose metabolism. Involved in the anomeric conversion of L-rhamnose. This chain is L-rhamnose mutarotase, found in Escherichia coli (strain K12 / MC4100 / BW2952).